A 363-amino-acid chain; its full sequence is UDP-N-acetylglucosamine--N-acetylmuramyl-(pentapeptide) pyrophosphoryl-undecaprenol N-acetylglucosamine transferase (363 aa).

Residues 16 to 18 (TGG), Asn128, Arg167, Ser195, Ile249, 268 to 273 (ALTVSE), and Gln294 contribute to the UDP-N-acetyl-alpha-D-glucosamine site.

It belongs to the glycosyltransferase 28 family. MurG subfamily.

The protein localises to the cell inner membrane. The catalysed reaction is di-trans,octa-cis-undecaprenyl diphospho-N-acetyl-alpha-D-muramoyl-L-alanyl-D-glutamyl-meso-2,6-diaminopimeloyl-D-alanyl-D-alanine + UDP-N-acetyl-alpha-D-glucosamine = di-trans,octa-cis-undecaprenyl diphospho-[N-acetyl-alpha-D-glucosaminyl-(1-&gt;4)]-N-acetyl-alpha-D-muramoyl-L-alanyl-D-glutamyl-meso-2,6-diaminopimeloyl-D-alanyl-D-alanine + UDP + H(+). It participates in cell wall biogenesis; peptidoglycan biosynthesis. Functionally, cell wall formation. Catalyzes the transfer of a GlcNAc subunit on undecaprenyl-pyrophosphoryl-MurNAc-pentapeptide (lipid intermediate I) to form undecaprenyl-pyrophosphoryl-MurNAc-(pentapeptide)GlcNAc (lipid intermediate II). The polypeptide is UDP-N-acetylglucosamine--N-acetylmuramyl-(pentapeptide) pyrophosphoryl-undecaprenol N-acetylglucosamine transferase (Marinobacter nauticus (strain ATCC 700491 / DSM 11845 / VT8) (Marinobacter aquaeolei)).